The sequence spans 1031 residues: Receptor-like protein EIX1 (1031 aa).

The first 29 residues, 1-29 (MDKWKYARLAQFLFTLSLLFLETSFGLGG), serve as a signal peptide directing secretion. N30 carries an N-linked (GlcNAc...) asparagine glycan. The interval 30-113 (NKTLCLDKER…PRLTGKLSPS (84 aa)) is N-cap. Over 30-971 (NKTLCLDKER…DEEEEFPSLE (942 aa)) the chain is Extracellular. The LRR 1 repeat unit spans residues 117–140 (LEYLNYLDLSVNEFERSEIPRFIG). The LRR 2; degenerate repeat unit spans residues 142-165 (LKRLEYLNLSASFFSGVIPIQFQN). N-linked (GlcNAc...) asparagine glycosylation is found at N149 and N165. LRR repeat units follow at residues 166-189 (LTSL…WLSH), 191-215 (SSLE…ITKV), 216-240 (PSLK…DLAN), and 243-266 (LISL…SWVF). N240 carries N-linked (GlcNAc...) asparagine glycosylation. N267 carries an N-linked (GlcNAc...) asparagine glycan. LRR repeat units follow at residues 269 to 292 (TTSL…RFGT), 293 to 317 (LMYL…SFGN), 318 to 341 (LTRL…LFLR), 346 to 369 (RKSL…ATRF), 370 to 393 (SSLK…AGQV), 394 to 416 (STLE…LALF), 417 to 440 (PSLR…IGKL), 441 to 463 (SQLR…MGQL), 465 to 487 (NLES…HLSN), 488 to 509 (LSSL…SFNW), 512 to 536 (PFQL…LQNQ), 538 to 559 (NYTV…WFSS), 561 to 584 (PPDL…LIEN), and 586 to 611 (YGYR…NVQI). Residue N317 is glycosylated (N-linked (GlcNAc...) asparagine). N-linked (GlcNAc...) asparagine glycans are attached at residues N365 and N383. N487 is a glycosylation site (N-linked (GlcNAc...) asparagine). N538, N568, and N597 each carry an N-linked (GlcNAc...) asparagine glycan. Residues 612-629 (FYLHKNQFFGSISSICRS) form an LRR 21; degenerate repeat. LRR repeat units lie at residues 630 to 654 (RTSP…WMNM), 655 to 678 (TSLA…LGSL), 679 to 703 (TNLK…QCQG), 705 to 725 (QILD…IGTD), 726 to 750 (LLNL…ICQL), and 752 to 773 (FLQI…CFNN). 2 N-linked (GlcNAc...) asparagine glycosylation sites follow: N653 and N666. N-linked (GlcNAc...) asparagine glycosylation is found at N773 and N781. LRR repeat units lie at residues 823-847 (LLYL…IADM), 848-871 (RGLK…IGQM), 872-895 (RMLE…LANL), and 896-918 (TFLS…STQL). 3 N-linked (GlcNAc...) asparagine glycosylation sites follow: N854, N861, and N894. Residues 919–971 (QSFDRSSYSDNAQLCGPPLQECPGYAPPSPLIDHGSNNNPQEHDEEEEFPSLE) are C-cap/acidic domain. Residues 972–992 (FYISMVLSFFVAFWGILGCLI) traverse the membrane as a helical segment. The Cytoplasmic segment spans residues 993-1031 (VNSSWRNAYFKFLTDTTSWLDMISRVWFARLKKKLRRAR).

This sequence belongs to the RLP family. Interacts with EIX elicitor protein.

The protein localises to the cell membrane. Functionally, involved in plant defense. Confers resistance to the fungal pathogen T.viride through recognition of the EIX elicitor protein. In Solanum lycopersicum (Tomato), this protein is Receptor-like protein EIX1.